Here is a 338-residue protein sequence, read N- to C-terminus: Solute carrier family 35 member G6 (338 aa).

A disordered region spans residues 1 to 25; it reads MAGSHPYLNPPDSTHPSPPSAPPSL. Transmembrane regions (helical) follow at residues 40–60, 67–87, 105–125, 160–180, 190–210, 221–241, 255–275, 281–301, and 310–330; these read LLVA…LSHM, LPSL…ALLL, YFYA…VQVV, CGLL…LWTL, ALGY…LLVY, TVAF…LFVL, CVGA…YAVT, LVCA…YYML, and IVGA…NLSC. The region spanning 49–174 is the EamA 1 domain; that stretch reads LPAGFVGPLS…SILGLIIIVG (126 aa). The EamA 2 domain occupies 272–325; that stretch reads YAVTKAHPALVCAVLHSEVVVALILQYYMLHETVAPSDIVGAGVVLGSIAIITA.

It belongs to the SLC35G solute transporter family. Expressed in placenta and testis.

Its subcellular location is the membrane. The chain is Solute carrier family 35 member G6 (SLC35G6) from Homo sapiens (Human).